The following is a 439-amino-acid chain: 3-phosphoshikimate 1-carboxyvinyltransferase (439 aa).

3 residues coordinate 3-phosphoshikimate: Lys21, Ser22, and Arg26. Lys21 contributes to the phosphoenolpyruvate binding site. 2 residues coordinate phosphoenolpyruvate: Gly94 and Arg122. Residues Ser167, Gln169, Asp320, and Lys347 each contribute to the 3-phosphoshikimate site. Gln169 provides a ligand contact to phosphoenolpyruvate. The active-site Proton acceptor is Asp320. Phosphoenolpyruvate is bound by residues Arg351 and Arg395.

It belongs to the EPSP synthase family. Monomer.

The protein resides in the cytoplasm. It carries out the reaction 3-phosphoshikimate + phosphoenolpyruvate = 5-O-(1-carboxyvinyl)-3-phosphoshikimate + phosphate. The protein operates within metabolic intermediate biosynthesis; chorismate biosynthesis; chorismate from D-erythrose 4-phosphate and phosphoenolpyruvate: step 6/7. Catalyzes the transfer of the enolpyruvyl moiety of phosphoenolpyruvate (PEP) to the 5-hydroxyl of shikimate-3-phosphate (S3P) to produce enolpyruvyl shikimate-3-phosphate and inorganic phosphate. This is 3-phosphoshikimate 1-carboxyvinyltransferase from Hyphomonas neptunium (strain ATCC 15444).